The primary structure comprises 168 residues: Ribosome maturation factor RimM (168 aa).

The region spanning 95–166 (EHEFYYSDII…RIQITPMEGL (72 aa)) is the PRC barrel domain.

This sequence belongs to the RimM family. In terms of assembly, binds ribosomal protein uS19.

Its subcellular location is the cytoplasm. An accessory protein needed during the final step in the assembly of 30S ribosomal subunit, possibly for assembly of the head region. Essential for efficient processing of 16S rRNA. May be needed both before and after RbfA during the maturation of 16S rRNA. It has affinity for free ribosomal 30S subunits but not for 70S ribosomes. This is Ribosome maturation factor RimM from Staphylococcus saprophyticus subsp. saprophyticus (strain ATCC 15305 / DSM 20229 / NCIMB 8711 / NCTC 7292 / S-41).